The sequence spans 250 residues: MAISSERVEELLRTFRESLKAKGFEIYPFKVGWYNAVLTAAHHLQYPADTLAVLVISTPAMFECAFLPFLQSQSCESLRDPIDQCTAHTLSACISLCFANQFVDVSYDYEMLPSRKPKFLAQTAAHVSGAAYYYQTSDIHNPPWGEKKMFGVCVHPQLGGWFAIRALLVFRDVQAGAGFQQRDPADCVCTQEERIRLLESFNLRWRDWSYRDIVPAEDRYSDQQKQYFITPPGQRRALLRQWGYLTDTQS.

Residues Asp-108, 119–122, 133–135, Cys-153, and Ile-164 contribute to the substrate site; these read FLAQ and YYQ.

This sequence belongs to the MMACHC family. In terms of assembly, monomer in the absence of bound substrate. Homodimer; dimerization is triggered by binding to FMN or adenosylcobalamin. Heterodimer with MMADHC. Requires FAD as cofactor. It depends on FMN as a cofactor.

Its subcellular location is the cytoplasm. The protein localises to the cytosol. It carries out the reaction 2 cob(II)alamin-[cyanocobalamin reductase] + 2 hydrogen cyanide + NADP(+) = 2 cyanocob(III)alamin + 2 apo-[cyanocobalamin reductase] + NADPH + H(+). The catalysed reaction is apo-[alkylcobalamin reductase] + an R-cob(III)alamin + glutathione = cob(I)alamin-[alkylcobalamin reductase] + an S-substituted glutathione + H(+). The enzyme catalyses apo-[alkylcobalamin reductase] + methylcob(III)alamin + glutathione = S-methyl glutathione + cob(I)alamin-[alkylcobalamin reductase] + H(+). It catalyses the reaction apo-[alkylcobalamin reductase] + adenosylcob(III)alamin + glutathione = S-adenosylglutathione + cob(I)alamin-[alkylcobalamin reductase] + H(+). In terms of biological role, cobalamin (vitamin B12) cytosolic chaperone that catalyzes the reductive decyanation of cyanocob(III)alamin (cyanocobalamin, CNCbl) to yield cob(II)alamin and cyanide, using FAD or FMN as cofactors and NADPH as cosubstrate. Cyanocobalamin constitutes the inactive form of vitamin B12 introduced from the diet, and is converted into the active cofactors methylcobalamin (MeCbl) involved in methionine biosynthesis, and 5'-deoxyadenosylcobalamin (AdoCbl) involved in the TCA cycle. Forms a complex with the lysosomal transporter ABCD4 and its chaperone LMBRD1, to transport cobalamin across the lysosomal membrane into the cytosol. The processing of cobalamin in the cytosol occurs in a multiprotein complex composed of at least MMACHC, MMADHC, MTRR (methionine synthase reductase) and MTR (methionine synthase) which may contribute to shuttle safely and efficiently cobalamin towards MTR in order to produce methionine. Also acts as a glutathione transferase by catalyzing the dealkylation of the alkylcob(III)alamins MeCbl and AdoCbl, using the thiolate of glutathione for nucleophilic displacement to generate cob(I)alamin and the corresponding glutathione thioether. The conversion of incoming MeCbl or AdoCbl into a common intermediate cob(I)alamin is necessary to meet the cellular needs for both cofactors. Cysteine and homocysteine cannot substitute for glutathione in this reaction. In Danio rerio (Zebrafish), this protein is Cyanocobalamin reductase / alkylcobalamin dealkylase (mmachc).